Consider the following 160-residue polypeptide: MTNGRVPMTPAGEQALRAELSRLKKTERPAIIEAIAEARDHGDLKENAEYHAARERQGIIEGRIKDIESKLSNAQVIDVTKLQANGMVIFGATVTVINVDTEEETTYQIVGEDEADIDNHKISVVAPLARALIKKEVGDEIILDTPKGKVTYEIVDVEYK.

It belongs to the GreA/GreB family.

In terms of biological role, necessary for efficient RNA polymerase transcription elongation past template-encoded arresting sites. The arresting sites in DNA have the property of trapping a certain fraction of elongating RNA polymerases that pass through, resulting in locked ternary complexes. Cleavage of the nascent transcript by cleavage factors such as GreA or GreB allows the resumption of elongation from the new 3'terminus. GreA releases sequences of 2 to 3 nucleotides. The sequence is that of Transcription elongation factor GreA from Francisella philomiragia subsp. philomiragia (strain ATCC 25017 / CCUG 19701 / FSC 153 / O#319-036).